The primary structure comprises 94 residues: Large ribosomal subunit protein eL43A (94 aa).

The C4-type zinc-finger motif lies at 39–62 (CPFCGRNTVKRTAAGIWCCNGKGC).

It belongs to the eukaryotic ribosomal protein eL43 family. As to quaternary structure, component of the large ribosomal subunit (LSU). Mature yeast ribosomes consist of a small (40S) and a large (60S) subunit. The 40S small subunit contains 1 molecule of ribosomal RNA (18S rRNA) and at least 33 different proteins. The large 60S subunit contains 3 rRNA molecules (25S, 5.8S and 5S rRNA) and at least 46 different proteins.

It localises to the cytoplasm. Its function is as follows. Component of the ribosome, a large ribonucleoprotein complex responsible for the synthesis of proteins in the cell. The small ribosomal subunit (SSU) binds messenger RNAs (mRNAs) and translates the encoded message by selecting cognate aminoacyl-transfer RNA (tRNA) molecules. The large subunit (LSU) contains the ribosomal catalytic site termed the peptidyl transferase center (PTC), which catalyzes the formation of peptide bonds, thereby polymerizing the amino acids delivered by tRNAs into a polypeptide chain. The nascent polypeptides leave the ribosome through a tunnel in the LSU and interact with protein factors that function in enzymatic processing, targeting, and the membrane insertion of nascent chains at the exit of the ribosomal tunnel. The sequence is that of Large ribosomal subunit protein eL43A (rpl4301) from Schizosaccharomyces pombe (strain 972 / ATCC 24843) (Fission yeast).